The following is a 130-amino-acid chain: Small ribosomal subunit protein uS8 (130 aa).

Belongs to the universal ribosomal protein uS8 family. In terms of assembly, part of the 30S ribosomal subunit. Contacts proteins S5 and S12.

Its function is as follows. One of the primary rRNA binding proteins, it binds directly to 16S rRNA central domain where it helps coordinate assembly of the platform of the 30S subunit. The sequence is that of Small ribosomal subunit protein uS8 from Cytophaga hutchinsonii (strain ATCC 33406 / DSM 1761 / CIP 103989 / NBRC 15051 / NCIMB 9469 / D465).